Reading from the N-terminus, the 229-residue chain is Ribonuclease 3 (229 aa).

Residues 5-127 form the RNase III domain; that stretch reads LARLERKLGY…LIGAIYLDAD (123 aa). Glutamate 40 contributes to the Mg(2+) binding site. Aspartate 44 is a catalytic residue. Mg(2+) is bound by residues aspartate 113 and glutamate 116. Glutamate 116 is a catalytic residue. The DRBM domain occupies 154 to 224; that stretch reads DPKTRLQEFL…AASALIALGV (71 aa).

The protein belongs to the ribonuclease III family. In terms of assembly, homodimer. Mg(2+) serves as cofactor.

The protein localises to the cytoplasm. The enzyme catalyses Endonucleolytic cleavage to 5'-phosphomonoester.. Its function is as follows. Digests double-stranded RNA. Involved in the processing of primary rRNA transcript to yield the immediate precursors to the large and small rRNAs (23S and 16S). Processes some mRNAs, and tRNAs when they are encoded in the rRNA operon. Processes pre-crRNA and tracrRNA of type II CRISPR loci if present in the organism. In Pseudomonas putida (strain GB-1), this protein is Ribonuclease 3.